A 180-amino-acid polypeptide reads, in one-letter code: Large ribosomal subunit protein uL5 (180 aa).

The protein belongs to the universal ribosomal protein uL5 family. In terms of assembly, part of the 50S ribosomal subunit; part of the 5S rRNA/L5/L18/L25 subcomplex. Contacts the 5S rRNA and the P site tRNA. Forms a bridge to the 30S subunit in the 70S ribosome.

Functionally, this is one of the proteins that bind and probably mediate the attachment of the 5S RNA into the large ribosomal subunit, where it forms part of the central protuberance. In the 70S ribosome it contacts protein S13 of the 30S subunit (bridge B1b), connecting the 2 subunits; this bridge is implicated in subunit movement. Contacts the P site tRNA; the 5S rRNA and some of its associated proteins might help stabilize positioning of ribosome-bound tRNAs. This Streptococcus agalactiae serotype Ia (strain ATCC 27591 / A909 / CDC SS700) protein is Large ribosomal subunit protein uL5.